The primary structure comprises 412 residues: Putative competence-damage inducible protein (412 aa).

This sequence belongs to the CinA family.

The polypeptide is Putative competence-damage inducible protein (Bacillus mycoides (strain KBAB4) (Bacillus weihenstephanensis)).